The following is a 603-amino-acid chain: Aspartate--tRNA(Asp/Asn) ligase (603 aa).

The tract at residues 205–208 (QLFK) is aspartate. R227 is an L-aspartate binding site. ATP contacts are provided by residues 227–229 (RDE) and Q236. H463 contacts L-aspartate. E497 serves as a coordination point for ATP. Residue R504 participates in L-aspartate binding. 549-552 (GMDR) lines the ATP pocket.

This sequence belongs to the class-II aminoacyl-tRNA synthetase family. Type 1 subfamily. In terms of assembly, homodimer.

It is found in the cytoplasm. It carries out the reaction tRNA(Asx) + L-aspartate + ATP = L-aspartyl-tRNA(Asx) + AMP + diphosphate. Aspartyl-tRNA synthetase with relaxed tRNA specificity since it is able to aspartylate not only its cognate tRNA(Asp) but also tRNA(Asn). Reaction proceeds in two steps: L-aspartate is first activated by ATP to form Asp-AMP and then transferred to the acceptor end of tRNA(Asp/Asn). The protein is Aspartate--tRNA(Asp/Asn) ligase of Anaeromyxobacter dehalogenans (strain 2CP-1 / ATCC BAA-258).